The chain runs to 259 residues: 4-hydroxy-tetrahydrodipicolinate reductase (259 aa).

NAD(+)-binding positions include 9 to 14 and E35; that span reads GAGGRM. R36 is an NADP(+) binding site. NAD(+) is bound by residues 92-94 and 116-119; these read GTT and APNM. Residue H149 is the Proton donor/acceptor of the active site. A (S)-2,3,4,5-tetrahydrodipicolinate-binding site is contributed by H150. K153 functions as the Proton donor in the catalytic mechanism. 159–160 serves as a coordination point for (S)-2,3,4,5-tetrahydrodipicolinate; sequence GT.

The protein belongs to the DapB family.

It is found in the cytoplasm. It carries out the reaction (S)-2,3,4,5-tetrahydrodipicolinate + NAD(+) + H2O = (2S,4S)-4-hydroxy-2,3,4,5-tetrahydrodipicolinate + NADH + H(+). The catalysed reaction is (S)-2,3,4,5-tetrahydrodipicolinate + NADP(+) + H2O = (2S,4S)-4-hydroxy-2,3,4,5-tetrahydrodipicolinate + NADPH + H(+). The protein operates within amino-acid biosynthesis; L-lysine biosynthesis via DAP pathway; (S)-tetrahydrodipicolinate from L-aspartate: step 4/4. Its function is as follows. Catalyzes the conversion of 4-hydroxy-tetrahydrodipicolinate (HTPA) to tetrahydrodipicolinate. In Nitratidesulfovibrio vulgaris (strain DP4) (Desulfovibrio vulgaris), this protein is 4-hydroxy-tetrahydrodipicolinate reductase.